Here is a 181-residue protein sequence, read N- to C-terminus: ATP-dependent protease subunit HslV (181 aa).

Residue T7 is part of the active site. Na(+) contacts are provided by G166, C169, and T172.

The protein belongs to the peptidase T1B family. HslV subfamily. As to quaternary structure, a double ring-shaped homohexamer of HslV is capped on each side by a ring-shaped HslU homohexamer. The assembly of the HslU/HslV complex is dependent on binding of ATP.

It is found in the cytoplasm. It carries out the reaction ATP-dependent cleavage of peptide bonds with broad specificity.. Its activity is regulated as follows. Allosterically activated by HslU binding. Protease subunit of a proteasome-like degradation complex believed to be a general protein degrading machinery. This Delftia acidovorans (strain DSM 14801 / SPH-1) protein is ATP-dependent protease subunit HslV.